The sequence spans 491 residues: Glucose-6-phosphate 1-dehydrogenase (491 aa).

Positions 51 and 150 each coordinate NADP(+). Substrate-binding residues include His180, Lys184, Glu218, and Asp237. Residue His242 is the Proton acceptor of the active site. A substrate-binding site is contributed by Lys341.

It belongs to the glucose-6-phosphate dehydrogenase family.

It carries out the reaction D-glucose 6-phosphate + NADP(+) = 6-phospho-D-glucono-1,5-lactone + NADPH + H(+). Its pathway is carbohydrate degradation; pentose phosphate pathway; D-ribulose 5-phosphate from D-glucose 6-phosphate (oxidative stage): step 1/3. In terms of biological role, catalyzes the oxidation of glucose 6-phosphate to 6-phosphogluconolactone. This Rhizobium meliloti (strain 1021) (Ensifer meliloti) protein is Glucose-6-phosphate 1-dehydrogenase.